The primary structure comprises 349 residues: tRNA N6-adenosine threonylcarbamoyltransferase (349 aa).

Positions 113 and 117 each coordinate Fe cation. Residues 135–139 (LVSGG), D169, G182, D186, and N281 contribute to the substrate site. D309 provides a ligand contact to Fe cation.

The protein belongs to the KAE1 / TsaD family. The cofactor is Fe(2+).

Its subcellular location is the cytoplasm. It catalyses the reaction L-threonylcarbamoyladenylate + adenosine(37) in tRNA = N(6)-L-threonylcarbamoyladenosine(37) in tRNA + AMP + H(+). Its function is as follows. Required for the formation of a threonylcarbamoyl group on adenosine at position 37 (t(6)A37) in tRNAs that read codons beginning with adenine. Is involved in the transfer of the threonylcarbamoyl moiety of threonylcarbamoyl-AMP (TC-AMP) to the N6 group of A37, together with TsaE and TsaB. TsaD likely plays a direct catalytic role in this reaction. This Corynebacterium aurimucosum (strain ATCC 700975 / DSM 44827 / CIP 107346 / CN-1) (Corynebacterium nigricans) protein is tRNA N6-adenosine threonylcarbamoyltransferase.